The chain runs to 249 residues: CDP-diacylglycerol pyrophosphatase (249 aa).

Residues G5–F25 traverse the membrane as a helical segment.

Belongs to the Cdh family.

The protein resides in the cell inner membrane. The enzyme catalyses a CDP-1,2-diacyl-sn-glycerol + H2O = a 1,2-diacyl-sn-glycero-3-phosphate + CMP + 2 H(+). It participates in phospholipid metabolism; CDP-diacylglycerol degradation; phosphatidate from CDP-diacylglycerol: step 1/1. The protein is CDP-diacylglycerol pyrophosphatase of Salmonella arizonae (strain ATCC BAA-731 / CDC346-86 / RSK2980).